A 301-amino-acid polypeptide reads, in one-letter code: tRNA-cytidine(32) 2-sulfurtransferase (301 aa).

Residues 47 to 52 carry the PP-loop motif motif; that stretch reads SGGKDS. 3 residues coordinate [4Fe-4S] cluster: Cys-122, Cys-125, and Cys-213.

Belongs to the TtcA family. As to quaternary structure, homodimer. The cofactor is Mg(2+). Requires [4Fe-4S] cluster as cofactor.

The protein resides in the cytoplasm. The catalysed reaction is cytidine(32) in tRNA + S-sulfanyl-L-cysteinyl-[cysteine desulfurase] + AH2 + ATP = 2-thiocytidine(32) in tRNA + L-cysteinyl-[cysteine desulfurase] + A + AMP + diphosphate + H(+). Its pathway is tRNA modification. Functionally, catalyzes the ATP-dependent 2-thiolation of cytidine in position 32 of tRNA, to form 2-thiocytidine (s(2)C32). The sulfur atoms are provided by the cysteine/cysteine desulfurase (IscS) system. This is tRNA-cytidine(32) 2-sulfurtransferase from Photobacterium profundum (strain SS9).